We begin with the raw amino-acid sequence, 187 residues long: Hypoxanthine/guanine phosphoribosyltransferase (187 aa).

The protein belongs to the purine/pyrimidine phosphoribosyltransferase family. Archaeal HPRT subfamily. In terms of assembly, homodimer.

It is found in the cytoplasm. It catalyses the reaction IMP + diphosphate = hypoxanthine + 5-phospho-alpha-D-ribose 1-diphosphate. The enzyme catalyses GMP + diphosphate = guanine + 5-phospho-alpha-D-ribose 1-diphosphate. It participates in purine metabolism; IMP biosynthesis via salvage pathway; IMP from hypoxanthine: step 1/1. In terms of biological role, catalyzes a salvage reaction resulting in the formation of IMP that is energically less costly than de novo synthesis. This Ferroglobus placidus (strain DSM 10642 / AEDII12DO) protein is Hypoxanthine/guanine phosphoribosyltransferase.